The following is a 392-amino-acid chain: Spermatogenesis associated 6-like protein (392 aa).

A phosphoserine mark is found at serine 260 and serine 263. The span at 286–301 shows a compositional bias: low complexity; the sequence is SCLDSSQFGKSSSSKQ. Positions 286 to 305 are disordered; sequence SCLDSSQFGKSSSSKQGDAD.

The protein belongs to the SPATA6 family.

This Homo sapiens (Human) protein is Spermatogenesis associated 6-like protein (SPATA6L).